Consider the following 116-residue polypeptide: Protein RALF-like 33 (116 aa).

Positions 1-23 are cleaved as a signal peptide; the sequence is MRGLSTKPVAIIIAILTVHFLFA. Positions 24 to 67 are cleaved as a propeptide — removed in mature form; sequence AVTSQSSGDFVPIESKCNGTIAECSLSTAEEEFEMDSEINRRIL. Asn-41 carries N-linked (GlcNAc...) asparagine glycosylation. 2 cysteine pairs are disulfide-bonded: Cys-85–Cys-95 and Cys-108–Cys-114.

It belongs to the plant rapid alkalinization factor (RALF) family. Proteolytically cleaved, probably by S1P, a subtilisin-like serine protease (subtilase). As to expression, expressed in roots, stems, leaves and plants.

The protein resides in the secreted. Its function is as follows. Cell signaling peptide that may regulate plant stress, growth, and development. Mediates a rapid alkalinization of extracellular space by mediating a transient increase in the cytoplasmic Ca(2+) concentration leading to a calcium-dependent signaling events through a cell surface receptor and a concomitant activation of some intracellular mitogen-activated protein kinases. This Arabidopsis thaliana (Mouse-ear cress) protein is Protein RALF-like 33 (RALFL33).